The following is a 96-amino-acid chain: MVEFSHTKKIGSAGRFGSRYGRKIRVRLRDVEIKQKKEYKCPVCAFPKLKRAGTSIWVCEKCGAKIAGGAYTPETGAGKVVTKAIRRVIESKSREI.

The segment at 41–62 (CPVCAFPKLKRAGTSIWVCEKC) adopts a C4-type zinc-finger fold.

Belongs to the eukaryotic ribosomal protein eL43 family. Zn(2+) is required as a cofactor.

This is Large ribosomal subunit protein eL43 from Methanococcus maripaludis (strain C5 / ATCC BAA-1333).